Consider the following 453-residue polypeptide: Transcription factor bHLH110 (453 aa).

Disordered stretches follow at residues 1-37 and 177-197; these read MDSA…YGAS and SSLP…RGNF. 2 stretches are compositionally biased toward low complexity: residues 8–32 and 177–192; these read QLQD…SDPS and SSLP…SSQS. In terms of domain architecture, bHLH spans 322-371; sequence VESRSSCPPFKVRKEKLGDRIAALQQLVSPFGKTDTASVLMEAIGYIKFL. A disordered region spans residues 386-411; sequence SRNRPGKASQLVSQSQEGDEEETRDL.

As to quaternary structure, homodimer.

The protein resides in the nucleus. In Arabidopsis thaliana (Mouse-ear cress), this protein is Transcription factor bHLH110 (BHLH110).